The chain runs to 636 residues: Probable potassium transport system protein Kup (636 aa).

12 helical membrane-spanning segments follow: residues Val-22–Tyr-42, Ile-64–Ile-84, Leu-115–Pro-135, Phe-150–Leu-170, Leu-182–Ile-202, Phe-220–Thr-240, Trp-261–Leu-281, Leu-293–Ile-313, Ile-351–Phe-371, Val-383–Leu-403, Pro-408–Ala-428, and Ile-433–Thr-453.

The protein belongs to the HAK/KUP transporter (TC 2.A.72) family.

It localises to the cell inner membrane. It carries out the reaction K(+)(in) + H(+)(in) = K(+)(out) + H(+)(out). Functionally, transport of potassium into the cell. Likely operates as a K(+):H(+) symporter. This Pseudomonas putida (strain ATCC 700007 / DSM 6899 / JCM 31910 / BCRC 17059 / LMG 24140 / F1) protein is Probable potassium transport system protein Kup.